Reading from the N-terminus, the 113-residue chain is MVDSDIQIPTSFDPFAEAEITDATGSTKEYVHIRIQQRNGRKSLTTVQGLKKELSYDKILKDLKKALCCNGTVVNDKELGKVIQLQGDQRKNVSTFIVQAGIVKKDQIKVHNF.

This sequence belongs to the SUI1 family.

Probably involved in translation. The sequence is that of Protein translation factor SUI1 homolog from Spuriopimpinella brachycarpa (Chamnamul).